The chain runs to 194 residues: Protein LURP-one-related 10 (194 aa).

Belongs to the LOR family.

Functionally, might be related to the phospholipid scramblase and tubby-like superfamily of membrane tethered transcription factors. The polypeptide is Protein LURP-one-related 10 (Arabidopsis thaliana (Mouse-ear cress)).